Reading from the N-terminus, the 370-residue chain is Phosphoserine aminotransferase (370 aa).

Methionine 1 is modified (N-acetylmethionine). O-phospho-L-serine contacts are provided by histidine 44 and arginine 45. Lysine 51 carries the post-translational modification N6-acetyllysine. Pyridoxal 5'-phosphate-binding residues include glycine 79, cysteine 80, and tryptophan 107. The residue at position 127 (lysine 127) is an N6-acetyllysine. Pyridoxal 5'-phosphate contacts are provided by threonine 156, aspartate 176, and glutamine 199. An N6-(pyridoxal phosphate)lysine modification is found at lysine 200. Pyridoxal 5'-phosphate contacts are provided by asparagine 241 and threonine 242. N6-acetyllysine is present on residues lysine 269, lysine 318, and lysine 323. Serine 331 is subject to Phosphoserine. N6-acetyllysine is present on lysine 333. Histidine 335, arginine 336, and arginine 342 together coordinate O-phospho-L-serine.

It belongs to the class-V pyridoxal-phosphate-dependent aminotransferase family. SerC subfamily. As to quaternary structure, homodimer. Requires pyridoxal 5'-phosphate as cofactor.

The catalysed reaction is O-phospho-L-serine + 2-oxoglutarate = 3-phosphooxypyruvate + L-glutamate. Its pathway is amino-acid biosynthesis; L-serine biosynthesis; L-serine from 3-phospho-D-glycerate: step 2/3. Functionally, involved in L-serine biosynthesis via the phosphorylated pathway, a three-step pathway converting the glycolytic intermediate 3-phospho-D-glycerate into L-serine. Catalyzes the second step, that is the pyridoxal 5'-phosphate-dependent transamination of 3-phosphohydroxypyruvate and L-glutamate to O-phosphoserine (OPS) and alpha-ketoglutarate. This Oryctolagus cuniculus (Rabbit) protein is Phosphoserine aminotransferase (PSAT1).